The chain runs to 205 residues: Holliday junction branch migration complex subunit RuvA (205 aa).

The segment at 1-64 (MIGRLRGVLV…EDAQLLYGFI (64 aa)) is domain I. Residues 65–143 (TKQERALFRL…SLMEASAGSE (79 aa)) form a domain II region. The flexible linker stretch occupies residues 144-156 (REFVLQSNYSPTP). Residues 157 to 205 (TVNSAEEDAISALISLGYKPPQASKSVSAAYKEGMDSETLIKAALKSML) are domain III.

It belongs to the RuvA family. As to quaternary structure, homotetramer. Forms an RuvA(8)-RuvB(12)-Holliday junction (HJ) complex. HJ DNA is sandwiched between 2 RuvA tetramers; dsDNA enters through RuvA and exits via RuvB. An RuvB hexamer assembles on each DNA strand where it exits the tetramer. Each RuvB hexamer is contacted by two RuvA subunits (via domain III) on 2 adjacent RuvB subunits; this complex drives branch migration. In the full resolvosome a probable DNA-RuvA(4)-RuvB(12)-RuvC(2) complex forms which resolves the HJ.

The protein resides in the cytoplasm. In terms of biological role, the RuvA-RuvB-RuvC complex processes Holliday junction (HJ) DNA during genetic recombination and DNA repair, while the RuvA-RuvB complex plays an important role in the rescue of blocked DNA replication forks via replication fork reversal (RFR). RuvA specifically binds to HJ cruciform DNA, conferring on it an open structure. The RuvB hexamer acts as an ATP-dependent pump, pulling dsDNA into and through the RuvAB complex. HJ branch migration allows RuvC to scan DNA until it finds its consensus sequence, where it cleaves and resolves the cruciform DNA. The protein is Holliday junction branch migration complex subunit RuvA of Shewanella sp. (strain W3-18-1).